The primary structure comprises 79 residues: Small ribosomal subunit protein bS18 (79 aa).

It belongs to the bacterial ribosomal protein bS18 family. In terms of assembly, part of the 30S ribosomal subunit. Forms a tight heterodimer with protein bS6.

Binds as a heterodimer with protein bS6 to the central domain of the 16S rRNA, where it helps stabilize the platform of the 30S subunit. The polypeptide is Small ribosomal subunit protein bS18 (rpsR) (Bacillus subtilis (strain 168)).